The sequence spans 225 residues: Ribose-5-phosphate isomerase A (225 aa).

Substrate contacts are provided by residues 32-35, 85-88, and 98-101; these read TGST, DGAD, and KGGG. The Proton acceptor role is filled by Glu107. Lys125 provides a ligand contact to substrate.

Belongs to the ribose 5-phosphate isomerase family. As to quaternary structure, homodimer.

The enzyme catalyses aldehydo-D-ribose 5-phosphate = D-ribulose 5-phosphate. Its pathway is carbohydrate degradation; pentose phosphate pathway; D-ribose 5-phosphate from D-ribulose 5-phosphate (non-oxidative stage): step 1/1. Functionally, catalyzes the reversible conversion of ribose-5-phosphate to ribulose 5-phosphate. In Hahella chejuensis (strain KCTC 2396), this protein is Ribose-5-phosphate isomerase A.